Here is a 479-residue protein sequence, read N- to C-terminus: F-box/LRR-repeat protein 16 (479 aa).

The segment at 1 to 92 (MSSPGIDGDP…GPVSGPPVER (92 aa)) is disordered. Pro residues predominate over residues 47–60 (CQPPPPPTLPPPSL). An Omega-N-methylarginine modification is found at Arg92. Positions 94 to 139 (PLATDEKILNGLFWYFSACEKCILAQVCKAWRRVLYQPKFWAGLTP) constitute an F-box domain. LRR repeat units follow at residues 321–342 (NLTS…ELVA), 347–369 (KLRS…YVAC), 373–394 (RLEE…SYLS), 398–419 (SLRS…KHLL), 423–444 (NLRL…SGLV), and 446–470 (LQEL…YFSQ).

In terms of assembly, interacts with SKP1 and CUL1.

Its function is as follows. Substrate-recognition component of the SCF (SKP1-CUL1-F-box protein)-type E3 ubiquitin ligase complex. The sequence is that of F-box/LRR-repeat protein 16 (Fbxl16) from Mus musculus (Mouse).